The primary structure comprises 183 residues: Histone deacetylase complex subunit SAP30L (183 aa).

Met-1 carries the post-translational modification N-acetylmethionine. Residues 1-10 (MNGFSTEEDS) are compositionally biased toward acidic residues. The tract at residues 1-23 (MNGFSTEEDSREGPPAAPAAAAP) is disordered. 2 disulfide bridges follow: Cys-29/Cys-30 and Cys-38/Cys-74. The segment at 29-77 (CCLIEDGERCVRPAGNASFSKRVQKSISQKKLKLDIDKSVRHLYICDFH) adopts an Atypical zinc-finger fold. Lys-49 is covalently cross-linked (Glycyl lysine isopeptide (Lys-Gly) (interchain with G-Cter in SUMO2)). The segment at 85–105 (RNKRKRKTSDDGGDSPEHDTD) is disordered. A Nuclear localization signal (NLS) motif is present at residues 86-91 (NKRKRK). Residues 88–90 (RKR) are important for DNA and phosphoinositide binding. Thr-92 bears the Phosphothreonine mark. Residues Ser-93 and Ser-99 each carry the phosphoserine modification. At Thr-104 the chain carries Phosphothreonine. Residues Lys-155, Lys-166, and Lys-175 each participate in a glycyl lysine isopeptide (Lys-Gly) (interchain with G-Cter in SUMO2) cross-link.

The protein belongs to the SAP30 family. Interacts with components of the histone deacetylase complex SIN3A, HDAC1 and HDAC2. Binds histones and nucleosomes. Interacts with FEZ1. In terms of tissue distribution, detected in brain and ovary, and at lower levels in heart, small intestine, lung, kidney, skeletal muscle, stomach and spleen (at protein level). Ubiquitous; expressed in all tissues tested with highest levels in testis.

Its subcellular location is the nucleus. The protein resides in the nucleolus. Functions as a transcription repressor, probably via its interaction with histone deacetylase complexes. Involved in the functional recruitment of the class 1 Sin3-histone deacetylase complex (HDAC) to the nucleolus. Binds DNA, apparently without sequence-specificity, and bends bound double-stranded DNA. Binds phosphoinositol phosphates (phosphoinositol 3-phosphate, phosphoinositol 4-phosphate and phosphoinositol 5-phosphate) via the same basic sequence motif that mediates DNA binding and nuclear import. Functionally, functions as a transcription repressor; isoform 2 has lower transcription repressor activity than isoform 1 and isoform 3. In terms of biological role, functions as a transcription repressor; its activity is marginally lower than that of isoform 1. The polypeptide is Histone deacetylase complex subunit SAP30L (SAP30L) (Homo sapiens (Human)).